We begin with the raw amino-acid sequence, 1463 residues long: DNA-directed RNA polymerase subunit beta'' (1463 aa).

Residues cysteine 239, cysteine 312, cysteine 319, and cysteine 322 each contribute to the Zn(2+) site. Disordered regions lie at residues threonine 836–methionine 869 and threonine 987–arginine 1007. Residues alanine 860–methionine 869 show a composition bias toward polar residues. Positions threonine 987–alanine 996 are enriched in basic residues. Polar residues predominate over residues serine 997–arginine 1007.

This sequence belongs to the RNA polymerase beta' chain family. RpoC2 subfamily. In plastids the minimal PEP RNA polymerase catalytic core is composed of four subunits: alpha, beta, beta', and beta''. When a (nuclear-encoded) sigma factor is associated with the core the holoenzyme is formed, which can initiate transcription. Requires Zn(2+) as cofactor.

Its subcellular location is the plastid. The protein resides in the chloroplast. The catalysed reaction is RNA(n) + a ribonucleoside 5'-triphosphate = RNA(n+1) + diphosphate. DNA-dependent RNA polymerase catalyzes the transcription of DNA into RNA using the four ribonucleoside triphosphates as substrates. The chain is DNA-directed RNA polymerase subunit beta'' from Nephroselmis olivacea (Green alga).